A 151-amino-acid chain; its full sequence is MKVVLLKDIPGIGKTGDMKEVKDGYARNFLIPRGLAKMATEGEIKRIRNEKILKEHKEDLTKKKSEEILKTLQKQIHKVPAKVGGGGKLFGALTSTNLSEILSKNSGVEIDKKWINMDKPLKETGLYDIEMRLPGGVRGTIKVEIVGEEKG.

The protein belongs to the bacterial ribosomal protein bL9 family.

Its function is as follows. Binds to the 23S rRNA. This chain is Large ribosomal subunit protein bL9, found in Pseudothermotoga lettingae (strain ATCC BAA-301 / DSM 14385 / NBRC 107922 / TMO) (Thermotoga lettingae).